Here is a 299-residue protein sequence, read N- to C-terminus: S-methyl-5'-thioadenosine phosphorylase (299 aa).

Phosphate-binding positions include serine 14, 56-57 (RH), and 89-90 (SA). Methionine 191 contributes to the substrate binding site. Threonine 192 is a binding site for phosphate. 215-217 (DYD) serves as a coordination point for substrate.

This sequence belongs to the PNP/MTAP phosphorylase family. MTAP subfamily. Homohexamer. Dimer of a homotrimer.

The enzyme catalyses S-methyl-5'-thioadenosine + phosphate = 5-(methylsulfanyl)-alpha-D-ribose 1-phosphate + adenine. It participates in amino-acid biosynthesis; L-methionine biosynthesis via salvage pathway; S-methyl-5-thio-alpha-D-ribose 1-phosphate from S-methyl-5'-thioadenosine (phosphorylase route): step 1/1. Its function is as follows. Catalyzes the reversible phosphorylation of S-methyl-5'-thioadenosine (MTA) to adenine and 5-methylthioribose-1-phosphate. Involved in the breakdown of MTA, a major by-product of polyamine biosynthesis. Responsible for the first step in the methionine salvage pathway after MTA has been generated from S-adenosylmethionine. Has broad substrate specificity with 6-aminopurine nucleosides as preferred substrates. This is S-methyl-5'-thioadenosine phosphorylase from Gloeobacter violaceus (strain ATCC 29082 / PCC 7421).